The following is a 347-amino-acid chain: Phosphoribosylformylglycinamidine cyclo-ligase (347 aa).

This sequence belongs to the AIR synthase family.

The protein localises to the cytoplasm. The catalysed reaction is 2-formamido-N(1)-(5-O-phospho-beta-D-ribosyl)acetamidine + ATP = 5-amino-1-(5-phospho-beta-D-ribosyl)imidazole + ADP + phosphate + H(+). The protein operates within purine metabolism; IMP biosynthesis via de novo pathway; 5-amino-1-(5-phospho-D-ribosyl)imidazole from N(2)-formyl-N(1)-(5-phospho-D-ribosyl)glycinamide: step 2/2. The protein is Phosphoribosylformylglycinamidine cyclo-ligase of Dechloromonas aromatica (strain RCB).